The primary structure comprises 610 residues: UvrABC system protein C (610 aa).

One can recognise a GIY-YIG domain in the interval 16 to 94; sequence SQPGVYRMYD…IKLYQPRYNV (79 aa). The 36-residue stretch at 204-239 folds into the UVR domain; that stretch reads DQVLTQLIARMEKASQDLAFEEAARIRDQIQAVRRV.

This sequence belongs to the UvrC family. Interacts with UvrB in an incision complex.

Its subcellular location is the cytoplasm. The UvrABC repair system catalyzes the recognition and processing of DNA lesions. UvrC both incises the 5' and 3' sides of the lesion. The N-terminal half is responsible for the 3' incision and the C-terminal half is responsible for the 5' incision. This Salmonella paratyphi B (strain ATCC BAA-1250 / SPB7) protein is UvrABC system protein C.